Here is a 198-residue protein sequence, read N- to C-terminus: Leucyl/phenylalanyl-tRNA--protein transferase (198 aa).

This sequence belongs to the L/F-transferase family.

Its subcellular location is the cytoplasm. The enzyme catalyses N-terminal L-lysyl-[protein] + L-leucyl-tRNA(Leu) = N-terminal L-leucyl-L-lysyl-[protein] + tRNA(Leu) + H(+). It carries out the reaction N-terminal L-arginyl-[protein] + L-leucyl-tRNA(Leu) = N-terminal L-leucyl-L-arginyl-[protein] + tRNA(Leu) + H(+). The catalysed reaction is L-phenylalanyl-tRNA(Phe) + an N-terminal L-alpha-aminoacyl-[protein] = an N-terminal L-phenylalanyl-L-alpha-aminoacyl-[protein] + tRNA(Phe). Functions in the N-end rule pathway of protein degradation where it conjugates Leu, Phe and, less efficiently, Met from aminoacyl-tRNAs to the N-termini of proteins containing an N-terminal arginine or lysine. This Synechocystis sp. (strain ATCC 27184 / PCC 6803 / Kazusa) protein is Leucyl/phenylalanyl-tRNA--protein transferase.